A 331-amino-acid chain; its full sequence is HTH-type transcriptional regulator RipA (331 aa).

Positions 112–209 (RAVAQVLVSN…GATPSTFTTG (98 aa)) constitute an HTH araC/xylS-type domain. DNA-binding regions (H-T-H motif) lie at residues 129-150 (EEFA…LKST) and 176-199 (ISVV…RRHT).

In terms of biological role, under iron limitation, RipA negatively controls the expression of the acn (aconitase), catA (catechol 1,2 dioxygenase), leuCD (isopropylmalate dehydratase), narKGHJI (nitrite/nitrate transporter and nitrate reductase), sdhCAB (succinate dehydrogenase), pta (phosphotransacetylase) and katA (catalase) genes. Binds to the consensus sequence in the promoter region. This Corynebacterium glutamicum (strain ATCC 13032 / DSM 20300 / JCM 1318 / BCRC 11384 / CCUG 27702 / LMG 3730 / NBRC 12168 / NCIMB 10025 / NRRL B-2784 / 534) protein is HTH-type transcriptional regulator RipA.